Here is a 362-residue protein sequence, read N- to C-terminus: Phospho-N-acetylmuramoyl-pentapeptide-transferase (362 aa).

The next 10 membrane-spanning stretches (helical) occupy residues 27 to 47 (VMAA…VIRW), 73 to 93 (TMGG…WGDL), 97 to 117 (YVWV…VDDW), 132 to 152 (WKYL…GLTA), 160 to 180 (LIVP…FVAL), 200 to 220 (GLAI…AYVA), 237 to 257 (AGEL…FLWF), 264 to 284 (VFMG…VAVV), 289 to 309 (IVLF…MVQV), and 339 to 359 (QVVV…LSTL).

Belongs to the glycosyltransferase 4 family. MraY subfamily. Mg(2+) serves as cofactor.

The protein resides in the cell inner membrane. It catalyses the reaction UDP-N-acetyl-alpha-D-muramoyl-L-alanyl-gamma-D-glutamyl-meso-2,6-diaminopimeloyl-D-alanyl-D-alanine + di-trans,octa-cis-undecaprenyl phosphate = di-trans,octa-cis-undecaprenyl diphospho-N-acetyl-alpha-D-muramoyl-L-alanyl-D-glutamyl-meso-2,6-diaminopimeloyl-D-alanyl-D-alanine + UMP. It participates in cell wall biogenesis; peptidoglycan biosynthesis. Its function is as follows. Catalyzes the initial step of the lipid cycle reactions in the biosynthesis of the cell wall peptidoglycan: transfers peptidoglycan precursor phospho-MurNAc-pentapeptide from UDP-MurNAc-pentapeptide onto the lipid carrier undecaprenyl phosphate, yielding undecaprenyl-pyrophosphoryl-MurNAc-pentapeptide, known as lipid I. In Aromatoleum aromaticum (strain DSM 19018 / LMG 30748 / EbN1) (Azoarcus sp. (strain EbN1)), this protein is Phospho-N-acetylmuramoyl-pentapeptide-transferase.